The primary structure comprises 100 residues: Urease subunit gamma (100 aa).

The protein belongs to the urease gamma subunit family. As to quaternary structure, heterotrimer of UreA (gamma), UreB (beta) and UreC (alpha) subunits. Three heterotrimers associate to form the active enzyme.

It localises to the cytoplasm. It catalyses the reaction urea + 2 H2O + H(+) = hydrogencarbonate + 2 NH4(+). Its pathway is nitrogen metabolism; urea degradation; CO(2) and NH(3) from urea (urease route): step 1/1. In Bordetella bronchiseptica (strain ATCC BAA-588 / NCTC 13252 / RB50) (Alcaligenes bronchisepticus), this protein is Urease subunit gamma.